Consider the following 206-residue polypeptide: Large ribosomal subunit protein uL4 (206 aa).

The tract at residues 47–77 (GTQSTKTRSEVRGGGIKPWRQKGTGRARQGS) is disordered.

It belongs to the universal ribosomal protein uL4 family. In terms of assembly, part of the 50S ribosomal subunit.

One of the primary rRNA binding proteins, this protein initially binds near the 5'-end of the 23S rRNA. It is important during the early stages of 50S assembly. It makes multiple contacts with different domains of the 23S rRNA in the assembled 50S subunit and ribosome. In terms of biological role, forms part of the polypeptide exit tunnel. The sequence is that of Large ribosomal subunit protein uL4 from Clostridium beijerinckii (strain ATCC 51743 / NCIMB 8052) (Clostridium acetobutylicum).